A 166-amino-acid chain; its full sequence is Nascent polypeptide-associated complex subunit beta (166 aa).

2 disordered regions span residues 1–40 and 129–166; these read MVLN…EDPK and HAAS…DKLD. Residues 35 to 100 enclose the NAC-A/B domain; it reads GGEDPKLQAA…GVDKELTELV (66 aa). Residues 141-153 are compositionally biased toward acidic residues; that stretch reads DDDDVPDVVENFD. Over residues 154 to 166 the composition is skewed to basic and acidic residues; that stretch reads EADKKETEVDKLD.

The protein belongs to the NAC-beta family. Part of the nascent polypeptide-associated complex (NAC), consisting of EGD2 and EGD1. NAC associates with ribosomes via EGD1.

It is found in the cytoplasm. Its subcellular location is the nucleus. Component of the nascent polypeptide-associated complex (NAC), a dynamic component of the ribosomal exit tunnel, protecting the emerging polypeptides from interaction with other cytoplasmic proteins to ensure appropriate nascent protein targeting. The NAC complex also promotes mitochondrial protein import by enhancing productive ribosome interactions with the outer mitochondrial membrane and blocks the inappropriate interaction of ribosomes translating non-secretory nascent polypeptides with translocation sites in the membrane of the endoplasmic reticulum. EGD1 may act as a transcription factor that exert a negative effect on the expression of several genes that are transcribed by RNA polymerase II. The polypeptide is Nascent polypeptide-associated complex subunit beta (EGD1) (Mycosarcoma maydis (Corn smut fungus)).